Reading from the N-terminus, the 226-residue chain is Ribonuclease 3 (226 aa).

Residues 6 to 128 form the RNase III domain; the sequence is INRLQRKLGY…LIGAIFLDSD (123 aa). Glu-41 serves as a coordination point for Mg(2+). Asp-45 is an active-site residue. Mg(2+)-binding residues include Asp-114 and Glu-117. Residue Glu-117 is part of the active site. A DRBM domain is found at 155 to 225; the sequence is DPKTRLQEYL…AEQALKQLEL (71 aa).

The protein belongs to the ribonuclease III family. In terms of assembly, homodimer. Mg(2+) serves as cofactor.

It is found in the cytoplasm. It carries out the reaction Endonucleolytic cleavage to 5'-phosphomonoester.. In terms of biological role, digests double-stranded RNA. Involved in the processing of primary rRNA transcript to yield the immediate precursors to the large and small rRNAs (23S and 16S). Processes some mRNAs, and tRNAs when they are encoded in the rRNA operon. Processes pre-crRNA and tracrRNA of type II CRISPR loci if present in the organism. This chain is Ribonuclease 3, found in Photorhabdus laumondii subsp. laumondii (strain DSM 15139 / CIP 105565 / TT01) (Photorhabdus luminescens subsp. laumondii).